We begin with the raw amino-acid sequence, 293 residues long: tRNA (guanine-N(7)-)-methyltransferase (293 aa).

Residues glycine 105, glutamate 128–isoleucine 129, asparagine 163–threonine 164, and cysteine 183 each bind S-adenosyl-L-methionine. The active site involves aspartate 186. Threonine 261 to glutamate 263 contributes to the S-adenosyl-L-methionine binding site.

The protein belongs to the class I-like SAM-binding methyltransferase superfamily. TrmB family. Forms a complex with trm82.

The protein localises to the nucleus. The enzyme catalyses guanosine(46) in tRNA + S-adenosyl-L-methionine = N(7)-methylguanosine(46) in tRNA + S-adenosyl-L-homocysteine. The protein operates within tRNA modification; N(7)-methylguanine-tRNA biosynthesis. Catalyzes the formation of N(7)-methylguanine at position 46 (m7G46) in tRNA. This chain is tRNA (guanine-N(7)-)-methyltransferase (trm8), found in Neurospora crassa (strain ATCC 24698 / 74-OR23-1A / CBS 708.71 / DSM 1257 / FGSC 987).